An 86-amino-acid polypeptide reads, in one-letter code: MANIKSQKKRVLTNEKAHLRNVAVKSGLKTAIRATREAIAAGDKAAAEAAYKVAAQKLDKAAGAGVIHRNQAANRKSGLAVAINAL.

It belongs to the bacterial ribosomal protein bS20 family.

Functionally, binds directly to 16S ribosomal RNA. The chain is Small ribosomal subunit protein bS20 from Bifidobacterium longum subsp. infantis (strain ATCC 15697 / DSM 20088 / JCM 1222 / NCTC 11817 / S12).